The primary structure comprises 291 residues: ATP synthase gamma chain (291 aa).

Belongs to the ATPase gamma chain family. As to quaternary structure, F-type ATPases have 2 components, CF(1) - the catalytic core - and CF(0) - the membrane proton channel. CF(1) has five subunits: alpha(3), beta(3), gamma(1), delta(1), epsilon(1). CF(0) has three main subunits: a, b and c.

Its subcellular location is the cell inner membrane. Functionally, produces ATP from ADP in the presence of a proton gradient across the membrane. The gamma chain is believed to be important in regulating ATPase activity and the flow of protons through the CF(0) complex. In Methylobacillus flagellatus (strain ATCC 51484 / DSM 6875 / VKM B-1610 / KT), this protein is ATP synthase gamma chain.